A 592-amino-acid chain; its full sequence is Movement and RNA silencing protein VP6 (592 aa).

Residues Ser-450–His-469 are disordered.

It is found in the host cell junction. The protein resides in the host plasmodesma. Its function is as follows. Transports viral genome to neighboring plant cells directly through plasmosdesmata, without any budding. The movement protein allows efficient cell to cell propagation, by bypassing the host cell wall barrier. Displays sequence non-specific nucleic acid binding activity. Acts as a suppressor of RNA-mediated gene silencing, also known as post-transcriptional gene silencing (PTGS), a mechanism of plant viral defense that limits the accumulation of viral RNAs. The chain is Movement and RNA silencing protein VP6 from Oryza latifolia (Indian wild rice).